A 2647-amino-acid polypeptide reads, in one-letter code: Filamin-A (2647 aa).

Over residues 1–15 the composition is skewed to low complexity; the sequence is MSSSHSRAGQSAAGA. The interval 1–39 is disordered; it reads MSSSHSRAGQSAAGAAPGGGVDTRDAEMPATEKDLAEDA. An N-acetylserine modification is found at S2. Residues 2–274 are actin-binding; sequence SSSHSRAGQS…PKAKLKPGAP (273 aa). S11 is modified (phosphoserine). Residues 22–39 show a composition bias toward basic and acidic residues; that stretch reads DTRDAEMPATEKDLAEDA. Residues K42, K43, and K135 each participate in a glycyl lysine isopeptide (Lys-Gly) (interchain with G-Cter in ubiquitin) cross-link. Calponin-homology (CH) domains lie at 43–149 and 166–269; these read KIQQ…LHYS and QTPK…KAKL. The tract at residues 271–294 is disordered; sequence PGAPLRPKLNPKKARAYGPGIEPT. Filamin repeat units lie at residues 276–374, 376–474, 475–570, 571–663, 667–763, 764–866, 867–965, 966–1061, 1062–1154, 1155–1249, 1250–1349, 1350–1442, 1443–1539, 1540–1636, and 1649–1740; these read RPKL…EVYV, KSQG…TVTV, GQAC…EVKV, GTEC…MADI, PQDF…RVNV, GAGS…RVKV, EPSH…SVAV, SPSL…PLEA, VAPT…KAHV, VPCF…KLQV, EPAV…QVPV, TEGC…KVPV, HDVT…KVKV, LPTH…RVRA, and VSIG…QVTA. Residue K299 forms a Glycyl lysine isopeptide (Lys-Gly) (interchain with G-Cter in SUMO1); alternate linkage. Residue K299 forms a Glycyl lysine isopeptide (Lys-Gly) (interchain with G-Cter in SUMO2); alternate linkage. K376 and K508 each carry N6-acetyllysine. Residues K700, K781, K837, K865, and K906 each carry the N6-acetyllysine modification. Phosphoserine occurs at positions 968 and 1055. K1071 carries the N6-acetyllysine; alternate modification. N6-succinyllysine; alternate is present on K1071. A phosphoserine mark is found at S1081 and S1084. Residue T1089 is modified to Phosphothreonine. Phosphoserine is present on residues S1301 and S1338. Positions 1361-1382 are disordered; the sequence is HGPGIQSGTTNKPNKFTVETRG. An N6-acetyllysine modification is found at K1372. Phosphoserine is present on residues S1459 and S1533. Residues 1490 to 1607 form an interaction with furin region; the sequence is PKGLVEPVDV…DNHDGTYTVA (118 aa). K1538 carries the post-translational modification N6-acetyllysine. S1630 and S1734 each carry phosphoserine. A hinge 1 region spans residues 1741-1778; the sequence is LAGDQPSVQPPLRSQQLAPQYTYAQGGQQTWAPERPLV. Filamin repeat units follow at residues 1779-1860, 1861-1950, 1951-2039, 2042-2131, 2132-2230, 2233-2325, 2327-2420, and 2424-2516; these read GVNG…QFYV, DYVN…PFTA, RVTG…PVVI, SEIG…SPFS, VKVT…QFTV, LGEG…VVPV, SPSG…KIRV, and GHGG…KAKV. S1835 bears the Phosphoserine mark. Phosphoserine is present on residues S1967, S2053, S2128, S2152, S2158, S2163, S2180, S2284, S2327, and S2329. Residue T2336 is modified to Phosphothreonine. S2338, S2370, S2414, S2510, S2523, and S2526 each carry phosphoserine. The interval 2517 to 2551 is hinge 2; it reads TGPRLVSNHSLHETSSVFVDSLTKATCAPQHGAPG. Residues 2517–2647 form a self-association site, tail region; sequence TGPRLVSNHS…PGSPYRVVVP (131 aa). The Filamin 24 repeat unit spans residues 2552–2646; that stretch reads PGPADASKVV…IPGSPYRVVV (95 aa). K2569 is subject to N6-acetyllysine; alternate. At K2569 the chain carries N6-succinyllysine; alternate. K2575 bears the N6-acetyllysine mark. T2599 is modified (phosphothreonine). K2607 and K2621 each carry N6-acetyllysine.

This sequence belongs to the filamin family. In terms of assembly, homodimer. Interacts with PDLIM2. Interacts with RFLNA and RFLNB. Interacts with FCGR1A, FLNB, FURIN, HSPB7, INPPL1, KCND2, MYOT, MYOZ1, ARHGAP24, PSEN1, PSEN2 and ECSCR. Also interacts with various other binding partners in addition to filamentous actin. Interacts (via N-terminus) with MIS18BP1 (via N-terminus). Interacts (via N-terminus) with TAF1B. Interacts with TMEM67 (via C-terminus) and MKS1. Interacts (via actin-binding domain) with MICALL2 (via CH domain). Interacts (via filamin repeat 5) with SYK; docks SYK to the plasma membrane. Interacts (via filamin repeats 19 and 21) with DRD3; increased PKA-mediated phosphorylation at Ser-2152. Interacts (via filamin repeat 21) with MAS1, AGTR1 and ADRA1D; increases PKA-mediated phosphorylation of FLNA at Ser-2152. Interacts (via filamin repeats 4, 9, 12, 17, 19, 21, and 23) with GP1BA (high affinity), ITGB7, ITGB2 and FBLIM1. Interacts with CEACAM1 (via cytoplasmic domain); inhibits cell migration and cell scattering by interfering with the interaction between FLNA and RALA. Interacts with FOXC1. Interacts (via calponin-homology (CH) domain 1 and filamin repeat 24) with CRMP1; the interaction alters FLNA ternary structure and thus promotes FLNA dissociation from F-actin. Interacts with DPYSL3/CRMP3 and DPYSL4/CRMP4. As to quaternary structure, interacts with integrin ITGB1 isoform 1/beta-1A and isoform 5/beta-1D. Interacts with LUZP1; the interaction is not necessary for colocalization of LUZP1 with F-actin. In terms of processing, phosphorylation at Ser-2152 is negatively regulated by the autoinhibited conformation of filamin repeats 19-21. Ligand binding induces a conformational switch triggering phosphorylation at Ser-2152 by PKA. Post-translationally, phosphorylation extent changes in response to cell activation. Polyubiquitination in the CH1 domain by a SCF-like complex containing ASB2 leads to proteasomal degradation. Prior dissociation from actin may be required to expose the target lysines. Ubiquitinated in endothelial cells by RNF213 downstream of the non-canonical Wnt signaling pathway, leading to its degradation by the proteasome. As to expression, ubiquitous.

Its subcellular location is the cytoplasm. The protein localises to the cell cortex. The protein resides in the cytoskeleton. It is found in the perikaryon. It localises to the cell projection. Its subcellular location is the growth cone. The protein localises to the podosome. Functionally, promotes orthogonal branching of actin filaments and links actin filaments to membrane glycoproteins. Anchors various transmembrane proteins to the actin cytoskeleton and serves as a scaffold for a wide range of cytoplasmic signaling proteins. Interaction with FLNB may allow neuroblast migration from the ventricular zone into the cortical plate. Tethers cell surface-localized furin, modulates its rate of internalization and directs its intracellular trafficking. Involved in ciliogenesis. Plays a role in cell-cell contacts and adherens junctions during the development of blood vessels, heart and brain organs. Plays a role in platelets morphology through interaction with SYK that regulates ITAM- and ITAM-like-containing receptor signaling, resulting in by platelet cytoskeleton organization maintenance. During the axon guidance process, required for growth cone collapse induced by SEMA3A-mediated stimulation of neurons. The chain is Filamin-A (FLNA) from Homo sapiens (Human).